Here is a 458-residue protein sequence, read N- to C-terminus: Bifunctional protein GlmU (458 aa).

The pyrophosphorylase stretch occupies residues 1 to 230 (MHKRTAVVLA…EREILGINSR (230 aa)). UDP-N-acetyl-alpha-D-glucosamine-binding positions include 9–12 (LAAG), Lys23, Gln73, and 78–79 (GT). Asp103 contacts Mg(2+). Residues Gly140, Glu155, Asn170, and Asn228 each contribute to the UDP-N-acetyl-alpha-D-glucosamine site. Residue Asn228 coordinates Mg(2+). The linker stretch occupies residues 231 to 251 (VQLAEAEAVLQDRLRRKWMDA). Positions 252 to 458 (GVTLIDPPSV…FLGRKHKGSQ (207 aa)) are N-acetyltransferase. 2 residues coordinate UDP-N-acetyl-alpha-D-glucosamine: Arg333 and Lys351. His363 (proton acceptor) is an active-site residue. 2 residues coordinate UDP-N-acetyl-alpha-D-glucosamine: Tyr366 and Asn377. Acetyl-CoA is bound by residues Ala380, 386-387 (NY), Ser405, Ala423, and Arg440.

This sequence in the N-terminal section; belongs to the N-acetylglucosamine-1-phosphate uridyltransferase family. It in the C-terminal section; belongs to the transferase hexapeptide repeat family. In terms of assembly, homotrimer. It depends on Mg(2+) as a cofactor.

Its subcellular location is the cytoplasm. It catalyses the reaction alpha-D-glucosamine 1-phosphate + acetyl-CoA = N-acetyl-alpha-D-glucosamine 1-phosphate + CoA + H(+). It carries out the reaction N-acetyl-alpha-D-glucosamine 1-phosphate + UTP + H(+) = UDP-N-acetyl-alpha-D-glucosamine + diphosphate. The protein operates within nucleotide-sugar biosynthesis; UDP-N-acetyl-alpha-D-glucosamine biosynthesis; N-acetyl-alpha-D-glucosamine 1-phosphate from alpha-D-glucosamine 6-phosphate (route II): step 2/2. It functions in the pathway nucleotide-sugar biosynthesis; UDP-N-acetyl-alpha-D-glucosamine biosynthesis; UDP-N-acetyl-alpha-D-glucosamine from N-acetyl-alpha-D-glucosamine 1-phosphate: step 1/1. It participates in bacterial outer membrane biogenesis; LPS lipid A biosynthesis. In terms of biological role, catalyzes the last two sequential reactions in the de novo biosynthetic pathway for UDP-N-acetylglucosamine (UDP-GlcNAc). The C-terminal domain catalyzes the transfer of acetyl group from acetyl coenzyme A to glucosamine-1-phosphate (GlcN-1-P) to produce N-acetylglucosamine-1-phosphate (GlcNAc-1-P), which is converted into UDP-GlcNAc by the transfer of uridine 5-monophosphate (from uridine 5-triphosphate), a reaction catalyzed by the N-terminal domain. This Heliobacterium modesticaldum (strain ATCC 51547 / Ice1) protein is Bifunctional protein GlmU.